Reading from the N-terminus, the 392-residue chain is Phosphoglycerate kinase (392 aa).

Residues 21–23 (DFN), arginine 36, 59–62 (HLGR), arginine 118, and arginine 151 contribute to the substrate site. ATP-binding positions include lysine 201, glycine 292, glutamate 323, and 349–352 (GGDS).

Belongs to the phosphoglycerate kinase family. Monomer.

Its subcellular location is the cytoplasm. The catalysed reaction is (2R)-3-phosphoglycerate + ATP = (2R)-3-phospho-glyceroyl phosphate + ADP. Its pathway is carbohydrate degradation; glycolysis; pyruvate from D-glyceraldehyde 3-phosphate: step 2/5. In Borrelia hermsii (strain HS1 / DAH), this protein is Phosphoglycerate kinase.